The chain runs to 124 residues: Sulfiredoxin (124 aa).

This sequence belongs to the sulfiredoxin family. Interacts with tpx1 in response to oxidative stress.

It is found in the cytoplasm. The protein resides in the nucleus. It carries out the reaction S-hydroxy-S-oxy-L-cysteinyl-[peroxiredoxin] + [protein]-dithiol + ATP = S-hydroxy-L-cysteinyl-[peroxiredoxin] + [protein]-disulfide + ADP + phosphate. In terms of biological role, contributes to oxidative stress resistance by reducing cysteine-sulfinic acid formed under exposure to oxidants in a peroxiredoxin. May catalyze the reduction in a multi-step process by acting both as a specific phosphotransferase and a thioltransferase. This is Sulfiredoxin (srx1) from Schizosaccharomyces pombe (strain 972 / ATCC 24843) (Fission yeast).